Consider the following 249-residue polypeptide: U1 small nuclear ribonucleoprotein usp102 (249 aa).

A disordered region spans residues 1–25 (MDPQTNSHQEVQQPSPKETDSQTPS). The region spanning 26–105 (ETLYIRNIEE…KPMMIQYSKS (80 aa)) is the RRM 1 domain. Positions 113–157 (RESPEEIETRKKDRKNRREMLKRTSALQPAAPKPTHKKPVPKRNV) are disordered. Residues 114–134 (ESPEEIETRKKDRKNRREMLK) show a composition bias toward basic and acidic residues. The RRM 2 domain maps to 174-247 (KVLLLQNIPQ…NQIKVTFARK (74 aa)).

The protein belongs to the RRM U1 A/B'' family. Component of the spliceosome where it is associated with snRNP U1.

The protein resides in the nucleus. It localises to the nucleolus. Functionally, involved in nuclear mRNA splicing. This is U1 small nuclear ribonucleoprotein usp102 from Schizosaccharomyces pombe (strain 972 / ATCC 24843) (Fission yeast).